The chain runs to 266 residues: GTP cyclohydrolase MptA (266 aa).

Belongs to the GTP cyclohydrolase IV family. As to quaternary structure, homodimer. Requires Fe(2+) as cofactor.

It carries out the reaction GTP + H2O = 7,8-dihydroneopterin 2',3'-cyclic phosphate + formate + diphosphate + H(+). The protein operates within cofactor biosynthesis; 5,6,7,8-tetrahydromethanopterin biosynthesis. Functionally, converts GTP to 7,8-dihydro-D-neopterin 2',3'-cyclic phosphate, the first intermediate in the biosynthesis of coenzyme methanopterin. The polypeptide is GTP cyclohydrolase MptA (Pyrococcus abyssi (strain GE5 / Orsay)).